The sequence spans 394 residues: Dual-specificity RNA methyltransferase RlmN (394 aa).

Catalysis depends on Glu-92, which acts as the Proton acceptor. The region spanning Glu-98 to Asp-341 is the Radical SAM core domain. Cysteines 105 and 346 form a disulfide. [4Fe-4S] cluster is bound by residues Cys-112, Cys-116, and Cys-119. S-adenosyl-L-methionine-binding positions include Gly-166–Glu-167, Ser-198, Ser-220–His-222, and Asn-303. Cys-346 acts as the S-methylcysteine intermediate in catalysis. The interval Asp-374 to Arg-394 is disordered.

The protein belongs to the radical SAM superfamily. RlmN family. [4Fe-4S] cluster serves as cofactor.

Its subcellular location is the cytoplasm. It carries out the reaction adenosine(2503) in 23S rRNA + 2 reduced [2Fe-2S]-[ferredoxin] + 2 S-adenosyl-L-methionine = 2-methyladenosine(2503) in 23S rRNA + 5'-deoxyadenosine + L-methionine + 2 oxidized [2Fe-2S]-[ferredoxin] + S-adenosyl-L-homocysteine. The catalysed reaction is adenosine(37) in tRNA + 2 reduced [2Fe-2S]-[ferredoxin] + 2 S-adenosyl-L-methionine = 2-methyladenosine(37) in tRNA + 5'-deoxyadenosine + L-methionine + 2 oxidized [2Fe-2S]-[ferredoxin] + S-adenosyl-L-homocysteine. Specifically methylates position 2 of adenine 2503 in 23S rRNA and position 2 of adenine 37 in tRNAs. m2A2503 modification seems to play a crucial role in the proofreading step occurring at the peptidyl transferase center and thus would serve to optimize ribosomal fidelity. The polypeptide is Dual-specificity RNA methyltransferase RlmN (Methylibium petroleiphilum (strain ATCC BAA-1232 / LMG 22953 / PM1)).